We begin with the raw amino-acid sequence, 165 residues long: Chorismate pyruvate-lyase (165 aa).

Met35, Arg77, Leu115, and Glu156 together coordinate substrate.

The protein belongs to the UbiC family. Monomer.

Its subcellular location is the cytoplasm. The catalysed reaction is chorismate = 4-hydroxybenzoate + pyruvate. It participates in cofactor biosynthesis; ubiquinone biosynthesis. In terms of biological role, removes the pyruvyl group from chorismate, with concomitant aromatization of the ring, to provide 4-hydroxybenzoate (4HB) for the ubiquinone pathway. This Shigella boydii serotype 18 (strain CDC 3083-94 / BS512) protein is Chorismate pyruvate-lyase.